Consider the following 88-residue polypeptide: ATP synthase subunit 9, mitochondrial (88 aa).

Helical transmembrane passes span 30–50 (IGLT…ILAV) and 66–86 (LGFA…FLIL).

Belongs to the ATPase C chain family. In terms of assembly, F-type ATPases have 2 components, CF(1) - the catalytic core - and CF(0) - the membrane proton channel. CF(1) has five subunits: alpha(3), beta(3), gamma(1), delta(1), epsilon(1). CF(0) has three main subunits: a, b and c.

It is found in the mitochondrion membrane. Mitochondrial membrane ATP synthase (F(1)F(0) ATP synthase or Complex V) produces ATP from ADP in the presence of a proton gradient across the membrane which is generated by electron transport complexes of the respiratory chain. F-type ATPases consist of two structural domains, F(1) - containing the extramembraneous catalytic core and F(0) - containing the membrane proton channel, linked together by a central stalk and a peripheral stalk. During catalysis, ATP synthesis in the catalytic domain of F(1) is coupled via a rotary mechanism of the central stalk subunits to proton translocation. Part of the complex F(0) domain. A homomeric c-ring of probably 10 subunits is part of the complex rotary element. The protein is ATP synthase subunit 9, mitochondrial (atp9) of Dictyostelium citrinum (Slime mold).